Here is a 218-residue protein sequence, read N- to C-terminus: Ras-related protein Rab-11B (218 aa).

Gly2 is subject to N-acetylglycine. Position 4 is a citrulline (Arg4). GTP contacts are provided by Ser20, Gly21, Gly23, Lys24, Ser25, Asn26, Asn37, Leu38, Ser40, Ser42, and Thr43. Ser25 serves as a coordination point for Mg(2+). The short motif at 36 to 47 (FNLESKSTIGVE) is the Switch 1 element. Thr43 and Asp66 together coordinate Mg(2+). The short motif at 67 to 86 (TAGQERYRAITSAYYRGAVG) is the Switch 2 element. GTP contacts are provided by Gly69, Asn124, Lys125, Asp127, Ala155, and Leu156. A disordered region spans residues 184-218 (RAAHDESPGNNVVDISVPPTTDGQKPNKLQCCQNL). S-geranylgeranyl cysteine attachment occurs at residues Cys214 and Cys215. Cys215 is modified (cysteine methyl ester). The propeptide at 216-218 (QNL) is removed in mature form.

It belongs to the small GTPase superfamily. Rab family. Interacts with KCNMA1. Interacts with RAB11FIP1, RAB11FIP2, RAB11FIP3 and RAB11FIP4. May interact with TBC1D14. Interacts with ATP6V1E1. Interacts with PI4KB. Interacts (GDP-bound form) with ZFYVE27. Interacts (GDP-bound form) with KIF5A in a ZFYVE27-dependent manner. Interacts with RELCH. Interacts (in GTP-bound form) with TBC1D8B (via domain Rab-GAP TBC). Forms a complex containing RAB11B, ASAP1, Rabin8/RAB3IP, RAP11FIP3 and ARF4. Interacts with WDR44. Requires Mg(2+) as cofactor. In terms of processing, citrullinated by PADI4. Post-translationally, (Microbial infection) Glycosylated on arginine residues by S.typhimurium protein Ssek3.

The protein resides in the recycling endosome membrane. Its subcellular location is the cytoplasmic vesicle. It localises to the secretory vesicle. It is found in the synaptic vesicle membrane. The protein localises to the phagosome membrane. The catalysed reaction is GTP + H2O = GDP + phosphate + H(+). With respect to regulation, regulated by guanine nucleotide exchange factors (GEFs) which promote the exchange of bound GDP for free GTP. Regulated by GTPase activating proteins (GAPs) which increase the GTP hydrolysis activity. Inhibited by GDP dissociation inhibitors (GDIs) which prevent Rab-GDP dissociation. Functionally, the small GTPases Rab are key regulators of intracellular membrane trafficking, from the formation of transport vesicles to their fusion with membranes. Rabs cycle between an inactive GDP-bound form and an active GTP-bound form that is able to recruit to membranes different set of downstream effectors directly responsible for vesicle formation, movement, tethering and fusion. The small Rab GTPase RAB11B plays a role in endocytic recycling, regulating apical recycling of several transmembrane proteins including cystic fibrosis transmembrane conductance regulator/CFTR, epithelial sodium channel/ENaC, potassium voltage-gated channel, and voltage-dependent L-type calcium channel. May also regulate constitutive and regulated secretion, like insulin granule exocytosis. Required for melanosome transport and release from melanocytes. Also regulates V-ATPase intracellular transport in response to extracellular acidosis. Promotes Rabin8/RAB3IP preciliary vesicular trafficking to mother centriole by forming a ciliary targeting complex containing Rab11, ASAP1, Rabin8/RAB3IP, RAB11FIP3 and ARF4, thereby regulating ciliogenesis initiation. On the contrary, upon LPAR1 receptor signaling pathway activation, interaction with phosphorylated WDR44 prevents Rab11-RAB3IP-RAB11FIP3 complex formation and cilia growth. The chain is Ras-related protein Rab-11B from Homo sapiens (Human).